Here is a 370-residue protein sequence, read N- to C-terminus: Leucine-rich repeat-containing protein 19 (370 aa).

Residues Met-1 to Ser-24 form the signal peptide. Topologically, residues Ser-25–Trp-270 are extracellular. N-linked (GlcNAc...) asparagine glycans are attached at residues Asn-32, Asn-37, Asn-62, and Asn-95. 5 LRR repeats span residues Lys-46–Thr-71, Tyr-72–Asn-95, Leu-96–Gly-119, Leu-120–Pro-143, and Arg-145–Leu-168. Residues Asn-176 to His-227 enclose the LRRCT domain. N-linked (GlcNAc...) asparagine glycosylation is found at Asn-179, Asn-192, Asn-195, Asn-202, Asn-251, and Asn-256. Residues Ala-271–Ile-291 traverse the membrane as a helical segment. Residues Lys-292 to Asn-370 lie on the Cytoplasmic side of the membrane.

Interacts with TRAF2 and TRAF6. In terms of tissue distribution, expressed in renal collecting duct epithelial cells.

It localises to the membrane. Its activity is regulated as follows. Activated by TLR ligands such as LPS, bacterial DNA and peptidoglycan. Its function is as follows. Pathogen-recognition receptor which mediates the activation of TRAF2- and TRAF6 NF-kappa-B signaling pathways and induces the expression of pro-inflammatory cytokines. In kidney, prevents infection by uropathogenic bacteria by inducing the production of cytokines, chemokines and antimicrobial substances. In gut, involved in host-microbiota interactions, plays a critical role in promoting the recruitment of immune cells and intestinal inflammation. In Homo sapiens (Human), this protein is Leucine-rich repeat-containing protein 19.